Reading from the N-terminus, the 339-residue chain is MKESLLAKSVRIAAVVAAYWTISISLVFLNKYLLSSPDIKLDAPLFVTWYQCVVTVICLFFLSLLGDRYPWIDTFPAFHIKLSVAKQVLPLSAVFVGMITFNNLCLKNLGVSFYNVGRSLTTVFNVICTYVILGQSTSYKAVICCAVIIGGFLMGVDQEGSSGKISYSGVLFGVLASLCVSLNAIYTKKFIPAVDNNIWRLQLYNNFNACFLFLPLMALLGEIGEVAHFPNLSSAYFWLMMTIGGVFGIAIGYITGLQIKVTSPLTHNISGTAKACVQTIMSVSYFHETKTALWWLSNAMVLGGSMAYTRVRHSEMKKAHTIQASKDDKALQEDGQTKV.

A run of 8 helical transmembrane segments spans residues 9–29 (SVRI…LVFL), 45–65 (LFVT…LSLL), 82–102 (LSVA…ITFN), 111–133 (VSFY…YVIL), 136–156 (STSY…LMGV), 165–185 (ISYS…LNAI), 209–229 (ACFL…VAHF), and 237–257 (FWLM…ITGL). Residues 319 to 339 (AHTIQASKDDKALQEDGQTKV) are disordered. Basic and acidic residues predominate over residues 325-339 (SKDDKALQEDGQTKV).

This sequence belongs to the TPT transporter family. SLC35C subfamily.

The protein resides in the golgi apparatus membrane. It catalyses the reaction GMP(out) + GDP-beta-L-fucose(in) = GMP(in) + GDP-beta-L-fucose(out). In terms of biological role, antiporter specific for GDP-l-fucose and depending on the concomitant reverse transport of GMP. Involved in GDP-fucose import from the cytoplasm into the Golgi lumen. This Nematostella vectensis (Starlet sea anemone) protein is GDP-fucose transporter 1 (slc35c1).